Consider the following 257-residue polypeptide: NAD-capped RNA hydrolase NudC (257 aa).

Position 69 (Arg-69) interacts with substrate. Positions 98 and 101 each coordinate Zn(2+). Substrate is bound at residue Glu-111. Positions 116 and 119 each coordinate Zn(2+). Tyr-124 contacts substrate. The 124-residue stretch at 125–248 (PQIAPCIIVA…TVARRLIEDT (124 aa)) folds into the Nudix hydrolase domain. Positions 158, 174, and 178 each coordinate a divalent metal cation. The short motif at 159–180 (GFVEVGETLEQAVAREVMEESG) is the Nudix box element. Position 192–199 (192–199 (QPWPFPQS)) interacts with substrate. Residue Glu-219 coordinates a divalent metal cation. Ala-241 contributes to the substrate binding site.

The protein belongs to the Nudix hydrolase family. NudC subfamily. As to quaternary structure, homodimer. Mg(2+) serves as cofactor. The cofactor is Mn(2+). It depends on Zn(2+) as a cofactor.

The enzyme catalyses a 5'-end NAD(+)-phospho-ribonucleoside in mRNA + H2O = a 5'-end phospho-adenosine-phospho-ribonucleoside in mRNA + beta-nicotinamide D-ribonucleotide + 2 H(+). The catalysed reaction is NAD(+) + H2O = beta-nicotinamide D-ribonucleotide + AMP + 2 H(+). It carries out the reaction NADH + H2O = reduced beta-nicotinamide D-ribonucleotide + AMP + 2 H(+). Its function is as follows. mRNA decapping enzyme that specifically removes the nicotinamide adenine dinucleotide (NAD) cap from a subset of mRNAs by hydrolyzing the diphosphate linkage to produce nicotinamide mononucleotide (NMN) and 5' monophosphate mRNA. The NAD-cap is present at the 5'-end of some mRNAs and stabilizes RNA against 5'-processing. Has preference for mRNAs with a 5'-end purine. Catalyzes the hydrolysis of a broad range of dinucleotide pyrophosphates. In Salmonella agona (strain SL483), this protein is NAD-capped RNA hydrolase NudC.